We begin with the raw amino-acid sequence, 349 residues long: 26S proteasome non-ATPase regulatory subunit 4 (349 aa).

The VWFA domain maps to 5–188; that stretch reads ATIVCLDNSE…LSDIILQSPI (184 aa). A UIM 1 domain is found at 204–223; the sequence is DTDPDLAMALKLSLEEEKQR. Residues 219 to 234 are compositionally biased toward basic and acidic residues; that stretch reads EEKQRQERERKAREEA. 2 disordered regions span residues 219–257 and 274–349; these read EEKQRQERERKAREEANGGSTNSGTTTTTAPTESNMDVN and TDKM…NEKK. The segment covering 235 to 253 has biased composition (low complexity); that stretch reads NGGSTNSGTTTTTAPTESN. A UIM 2 domain is found at 259–278; the sequence is EDDPELAEALALSMATDKME. Positions 280–301 are enriched in low complexity; the sequence is QSSTTNTDSQPPQQQQQPPTDD. Basic and acidic residues predominate over residues 335–349; that stretch reads LSKKDEDKDKDNEKK.

This sequence belongs to the proteasome subunit S5A family. As to quaternary structure, the 26S proteasome is composed of a core protease, known as the 20S proteasome, capped at one or both ends by the 19S regulatory complex (RC). The RC is composed of at least 18 different subunits in two subcomplexes, the base and the lid, which form the portions proximal and distal to the 20S proteolytic core, respectively.

Functionally, binds and presumably selects ubiquitin-conjugates for destruction. In Dictyostelium discoideum (Social amoeba), this protein is 26S proteasome non-ATPase regulatory subunit 4 (psmD4).